Reading from the N-terminus, the 480-residue chain is Caspase-8 (480 aa).

A propeptide spanning residues 1-218 is cleaved from the precursor; the sequence is MDFQSCLYAI…ELCDSPREQD (218 aa). 2 consecutive DED domains span residues 3–80 and 101–177; these read FQSC…NFLD and YRVM…KIED. Phosphoserine is present on residues serine 188 and serine 213. Lysine 226 carries the post-translational modification N6-acetyllysine. The active site involves histidine 319. Tyrosine 336 is modified (phosphotyrosine). Residue cysteine 362 is part of the active site. Residues 377–387 constitute a propeptide that is removed on maturation; the sequence is FEQQNHTLEVD. The residue at position 389 (serine 389) is a Phosphoserine; by CDK1.

This sequence belongs to the peptidase C14A family. In terms of assembly, heterotetramer that consists of two anti-parallel arranged heterodimers, each one formed by a 18 kDa (p18) and a 10 kDa (p10) subunit. Component of the death-induced signaling complex (DISC) composed of cell surface receptor FAS/CD95 or TNFRSF1A, adapter protein FADD and the CASP8 protease; recruitment of CASP8 to the complex is required for processing of CASP8 into the p18 and p10 subunits. Component of the AIM2 PANoptosome complex, a multiprotein complex that drives inflammatory cell death (PANoptosis). Interacts with CFLAR and PEA15. Interacts with RFFL and RNF34; negatively regulate CASP8 through proteasomal degradation. Interacts with TNFAIP8L2. Interacts with CASP8AP2. Interacts with NOL3; decreases CASP8 activity in a mitochondria localization- and phosphorylation-dependent manner and this interaction is dissociated by calcium. Interacts with UBR2. Interacts with RIPK1. Interacts with stimulated TNFRSF10B; this interaction is followed by CASP8 proteolytic cleavage and activation. Generation of the subunits requires association with the death-inducing signaling complex (DISC), whereas additional processing is likely due to the autocatalytic activity of the activated protease. GZMB and CASP10 can be involved in these processing events. Post-translationally, (Microbial infection) Proteolytically cleaved by the cowpox virus CRMA death inhibitory protein. In terms of processing, phosphorylation on Ser-389 during mitosis by CDK1 inhibits activation by proteolysis and prevents apoptosis. This phosphorylation occurs in cancer cell lines, as well as in primary breast tissues and lymphocytes. Expressed in a wide variety of tissues. Highest expression in spleen, thymus, lung, liver and kidney. Lower expression in heart, brain, testis and skeletal muscle.

It is found in the cytoplasm. The protein localises to the nucleus. The enzyme catalyses Strict requirement for Asp at position P1 and has a preferred cleavage sequence of (Leu/Asp/Val)-Glu-Thr-Asp-|-(Gly/Ser/Ala).. Its activity is regulated as follows. CASP8 activity is restricted by RIPK1. (Microbial infection) Inhibited by baculovirus p35 protein P35. Its function is as follows. Thiol protease that plays a key role in programmed cell death by acting as a molecular switch for apoptosis, necroptosis and pyroptosis, and is required to prevent tissue damage during embryonic development and adulthood. Initiator protease that induces extrinsic apoptosis by mediating cleavage and activation of effector caspases responsible for FAS/CD95-mediated and TNFRSF1A-induced cell death. Cleaves and activates effector caspases CASP3, CASP4, CASP6, CASP7, CASP9 and CASP10. Binding to the adapter molecule FADD recruits it to either receptor FAS/CD95 or TNFRSF1A. The resulting aggregate called the death-inducing signaling complex (DISC) performs CASP8 proteolytic activation. The active dimeric enzyme is then liberated from the DISC and free to activate downstream apoptotic proteases. Proteolytic fragments of the N-terminal propeptide (termed CAP3, CAP5 and CAP6) are likely retained in the DISC. In addition to extrinsic apoptosis, also acts as a negative regulator of necroptosis: acts by cleaving RIPK1 at 'Asp-325', which is crucial to inhibit RIPK1 kinase activity, limiting TNF-induced apoptosis, necroptosis and inflammatory response. Also able to initiate pyroptosis by mediating cleavage and activation of gasdermin-C and -D (GSDMC and GSDMD, respectively): gasdermin cleavage promotes release of the N-terminal moiety that binds to membranes and forms pores, triggering pyroptosis. Initiates pyroptosis following inactivation of MAP3K7/TAK1. Also acts as a regulator of innate immunity by mediating cleavage and inactivation of N4BP1 downstream of TLR3 or TLR4, thereby promoting cytokine production. May participate in the Granzyme B (GZMB) cell death pathways. Cleaves PARP1 and PARP2. This is Caspase-8 from Mus musculus (Mouse).